A 459-amino-acid chain; its full sequence is Methionine aminopeptidase 2-1 (459 aa).

Positions 1 to 12 are enriched in basic and acidic residues; the sequence is MGSKSPEDHRQG. The segment at 1–79 is disordered; sequence MGSKSPEDHR…RKRNKKKSKK (79 aa). Acidic residues predominate over residues 43 to 54; that stretch reads GQDEDGDDDDDE. Residues 67–79 show a composition bias toward basic residues; that stretch reads KKKRKRNKKKSKK. His210 contributes to the substrate binding site. The a divalent metal cation site is built by Asp231, Asp242, and His311. Residue His319 participates in substrate binding. A divalent metal cation is bound by residues Glu344 and Glu440.

This sequence belongs to the peptidase M24A family. Methionine aminopeptidase eukaryotic type 2 subfamily. The cofactor is Co(2+). It depends on Zn(2+) as a cofactor. Mn(2+) serves as cofactor. Requires Fe(2+) as cofactor.

The protein localises to the cytoplasm. The catalysed reaction is Release of N-terminal amino acids, preferentially methionine, from peptides and arylamides.. Its function is as follows. Cotranslationally removes the N-terminal methionine from nascent proteins. The N-terminal methionine is often cleaved when the second residue in the primary sequence is small and uncharged (Met-Ala-, Cys, Gly, Pro, Ser, Thr, or Val). In Pyrenophora tritici-repentis (strain Pt-1C-BFP) (Wheat tan spot fungus), this protein is Methionine aminopeptidase 2-1.